Here is a 383-residue protein sequence, read N- to C-terminus: Lipid-A-disaccharide synthase (383 aa).

It belongs to the LpxB family.

The catalysed reaction is a lipid X + a UDP-2-N,3-O-bis[(3R)-3-hydroxyacyl]-alpha-D-glucosamine = a lipid A disaccharide + UDP + H(+). The protein operates within bacterial outer membrane biogenesis; LPS lipid A biosynthesis. Functionally, condensation of UDP-2,3-diacylglucosamine and 2,3-diacylglucosamine-1-phosphate to form lipid A disaccharide, a precursor of lipid A, a phosphorylated glycolipid that anchors the lipopolysaccharide to the outer membrane of the cell. This chain is Lipid-A-disaccharide synthase, found in Myxococcus xanthus (strain DK1622).